Consider the following 146-residue polypeptide: uncharacterized protein (146 aa).

This is an uncharacterized protein from Orgyia pseudotsugata multicapsid polyhedrosis virus (OpMNPV).